The chain runs to 459 residues: NADH oxidase (459 aa).

Residue asparagine 10 coordinates FAD. The active-site Proton acceptor is the histidine 11. FAD is bound by residues alanine 12, aspartate 34, glutamine 35, cysteine 44, valine 81, alanine 110, serine 113, lysine 143, and tyrosine 172. Cysteine 44 acts as the Redox-active in catalysis. Cysteine 44 is modified (cysteine sulfinic acid (-SO2H)). Isoleucine 173, aspartate 192, tyrosine 201, and glycine 256 together coordinate NAD(+). Aspartate 294 is an FAD binding site. An NAD(+)-binding site is contributed by alanine 310. 3 residues coordinate FAD: leucine 311, alanine 312, and serine 313. Position 341 (glycine 341) interacts with NAD(+). Position 439 (phenylalanine 439) interacts with FAD.

It belongs to the class-III pyridine nucleotide-disulfide oxidoreductase family. FAD is required as a cofactor.

The protein resides in the secreted. It is found in the cell wall. It catalyses the reaction 2 NADH + O2 + 2 H(+) = 2 NAD(+) + 2 H2O. In terms of biological role, catalyzes the four-electron reduction of molecular oxygen to water. Plays a role in redox balance maintenance. May be involved in mediating bacterial adhesion to host cells. May be considered a potential virulence factor. This Streptococcus pneumoniae (strain ATCC BAA-255 / R6) protein is NADH oxidase.